Consider the following 350-residue polypeptide: Biotin synthase (350 aa).

One can recognise a Radical SAM core domain in the interval 42–269; the sequence is NEVQVSTLCS…QSHVRLSAGR (228 aa). [4Fe-4S] cluster-binding residues include C57, C61, and C64. C101, C132, C192, and R264 together coordinate [2Fe-2S] cluster.

The protein belongs to the radical SAM superfamily. Biotin synthase family. As to quaternary structure, homodimer. Requires [4Fe-4S] cluster as cofactor. The cofactor is [2Fe-2S] cluster.

It carries out the reaction (4R,5S)-dethiobiotin + (sulfur carrier)-SH + 2 reduced [2Fe-2S]-[ferredoxin] + 2 S-adenosyl-L-methionine = (sulfur carrier)-H + biotin + 2 5'-deoxyadenosine + 2 L-methionine + 2 oxidized [2Fe-2S]-[ferredoxin]. Its pathway is cofactor biosynthesis; biotin biosynthesis; biotin from 7,8-diaminononanoate: step 2/2. Catalyzes the conversion of dethiobiotin (DTB) to biotin by the insertion of a sulfur atom into dethiobiotin via a radical-based mechanism. The sequence is that of Biotin synthase from Saccharophagus degradans (strain 2-40 / ATCC 43961 / DSM 17024).